Reading from the N-terminus, the 363-residue chain is Mannose-1-phosphate guanyltransferase (363 aa).

Belongs to the transferase hexapeptide repeat family.

The protein localises to the cytoplasm. The enzyme catalyses alpha-D-mannose 1-phosphate + GTP + H(+) = GDP-alpha-D-mannose + diphosphate. It participates in nucleotide-sugar biosynthesis; GDP-alpha-D-mannose biosynthesis; GDP-alpha-D-mannose from alpha-D-mannose 1-phosphate (GTP route): step 1/1. Involved in cell wall synthesis where it is required for glycosylation. Involved in cell cycle progression through cell-size checkpoint. Required for the correct assembly of the septum. This Schizosaccharomyces pombe (strain 972 / ATCC 24843) (Fission yeast) protein is Mannose-1-phosphate guanyltransferase (mpg1).